Consider the following 392-residue polypeptide: Major outer membrane porin (392 aa).

The signal sequence occupies residues Met-1–Ala-22.

This sequence belongs to the chlamydial porin (CP) (TC 1.B.2) family. As to quaternary structure, part of a disulfide cross-linked outer membrane complex (COMC) composed of the major outer membrane porin (MOMP), the small cysteine-rich protein (OmcA) and the large cysteine-rich periplasmic protein (OmcB).

The protein resides in the cell outer membrane. In terms of biological role, in elementary bodies (EBs, the infectious stage, which is able to survive outside the host cell) provides the structural integrity of the outer envelope through disulfide cross-links with the small cysteine-rich protein and the large cysteine-rich periplasmic protein. It has been described in publications as the Sarkosyl-insoluble COMC (Chlamydia outer membrane complex), and serves as the functional equivalent of peptidoglycan. Its function is as follows. Permits diffusion of specific solutes through the outer membrane. The sequence is that of Major outer membrane porin (ompA) from Chlamydia psittaci (Chlamydophila psittaci).